The primary structure comprises 310 residues: Junctional adhesion molecule C (310 aa).

Positions 1–29 are cleaved as a signal peptide; that stretch reads MALSRRLRLRLYARLPDFFLLLLFRGCMI. The Extracellular segment spans residues 30-241; that stretch reads EAVNLKSSNR…GQDMEVYDLN (212 aa). The 93-residue stretch at 35 to 127 folds into the Ig-like V-type domain; the sequence is KSSNRNPVVH…VALNDRKEVD (93 aa). 2 disulfide bridges follow: cysteine 53-cysteine 115 and cysteine 160-cysteine 219. 2 N-linked (GlcNAc...) asparagine glycosylation sites follow: asparagine 104 and asparagine 192. The Ig-like C2-type domain maps to 139–236; the sequence is PVTPVCRIPA…AARCEGQDME (98 aa). The chain crosses the membrane as a helical span at residues 242–262; it reads IAGIIGGVLVVLIVLAVITMG. At 263–310 the chain is on the cytoplasmic side; the sequence is ICCAYRRGCFISSKQDGESYKSPGKHDGVNYIRTSEEGDFRHKSSFVI. Residues cysteine 264 and cysteine 265 are each lipidated (S-palmitoyl cysteine).

It belongs to the immunoglobulin superfamily. As to quaternary structure, interacts with ITGAM. Interacts with GORASP2. In terms of processing, proteolytically cleaved from endothelial cells surface into a soluble form by ADAM10 and ADAM17; the release of soluble JAM3 is increased by pro-inflammatory factors. Post-translationally, N-glycosylated. S-palmitoylated by ZDHHC7. S-palmitoylation promotes expression at tight junctions. In terms of tissue distribution, colocalizes with Jam2 near the lumen of seminiferous tubulues. Detected at junctional plaques that correspond to cell-cell contacts between spermatids and Sertoli cells. Detected on endothelial cells, in brain vessels and kidney glomeruli (at protein level). Detected in heart, lung, liver, kidney, testis, thymus, lymph node and Peyer patch. Endothelial cells.

It is found in the cell membrane. Its subcellular location is the cell junction. It localises to the desmosome. The protein localises to the tight junction. The protein resides in the secreted. Functionally, junctional adhesion protein that mediates heterotypic cell-cell interactions with its cognate receptor JAM2 to regulate different cellular processes. Plays a role in homing and mobilization of hematopoietic stem and progenitor cells within the bone marrow. At the surface of bone marrow stromal cells, it contributes to the retention of the hematopoietic stem and progenitor cells expressing JAM3. Plays a central role in leukocytes extravasation by facilitating transmigration through the endothelium. Plays a role in spermatogenesis where JAM2 and JAM3, which are respectively expressed by Sertoli and germ cells, mediate an interaction between both cell types and play an essential role in the anchorage of germ cells onto Sertoli cells and the assembly of cell polarity complexes during spermatid differentiation. Also functions as a counter-receptor for ITGAM, mediating leukocyte-platelet interactions and is involved in the regulation of transepithelial migration of polymorphonuclear neutrophils (PMN). Plays a role in angiogenesis. Plays a role in the regulation of cell migration. During myogenesis, it is involved in myocyte fusion. Its function is as follows. Promotes chemotaxis of vascular endothelial cells and stimulates angiogenesis. The sequence is that of Junctional adhesion molecule C (Jam3) from Mus musculus (Mouse).